A 187-amino-acid polypeptide reads, in one-letter code: Potassium-transporting ATPase KdpC subunit (187 aa).

Residues 11 to 31 (LILLMTVVTGALYPLAVTGIA) form a helical membrane-spanning segment.

It belongs to the KdpC family. As to quaternary structure, the system is composed of three essential subunits: KdpA, KdpB and KdpC.

The protein localises to the cell inner membrane. Functionally, part of the high-affinity ATP-driven potassium transport (or Kdp) system, which catalyzes the hydrolysis of ATP coupled with the electrogenic transport of potassium into the cytoplasm. This subunit acts as a catalytic chaperone that increases the ATP-binding affinity of the ATP-hydrolyzing subunit KdpB by the formation of a transient KdpB/KdpC/ATP ternary complex. The protein is Potassium-transporting ATPase KdpC subunit of Pseudomonas entomophila (strain L48).